The primary structure comprises 125 residues: Evasin P672 (125 aa).

The signal sequence occupies residues 1–21; the sequence is MAHKIAIGLVCVLYALHIMSA. N-linked (GlcNAc...) asparagine glycosylation is found at asparagine 35, asparagine 55, asparagine 65, asparagine 72, asparagine 78, asparagine 104, asparagine 112, and asparagine 118. 3 disulfides stabilise this stretch: cysteine 70-cysteine 110, cysteine 87-cysteine 115, and cysteine 105-cysteine 124.

It localises to the secreted. Functionally, salivary chemokine-binding protein which has chemokine-neutralizing activity and binds to host chemokines CCL1, CCL2, CCL3, CCL3L1, CCL7, CCL8, CCL11, CCL12, CCL13, CCL14, CCL15, CCL16, CCL18 and CCL23. Binds to CCL8 with 1:1 stoichiometry and disrupts CCL8 homodimer formation. The polypeptide is Evasin P672 (Rhipicephalus pulchellus (Yellow backed tick)).